A 530-amino-acid polypeptide reads, in one-letter code: Probable flavin-containing monooxygenase 1 (530 aa).

Residues 17 to 21 (GAGVS), glutamate 38, 46 to 47 (VW), and 58 to 59 (QS) contribute to the FAD site. 219-222 (SAID) serves as a coordination point for NADP(+).

The protein belongs to the FMO family. It depends on FAD as a cofactor.

Required for the establishment of systemic acquired resistance (SAR). Not involved in local defense mechanisms. Confers a salicylic acid-dependent (SA) resistance to virulent pathogens such as P.syringae pv tomato and H.parasitica. The polypeptide is Probable flavin-containing monooxygenase 1 (FMO1) (Arabidopsis thaliana (Mouse-ear cress)).